The sequence spans 83 residues: Weak toxin DE-1 (83 aa).

An N-terminal signal peptide occupies residues 1–21 (MKTLLLTLVVVTIVCLDLGYS). 4 disulfides stabilise this stretch: Cys-24–Cys-45, Cys-38–Cys-62, Cys-64–Cys-75, and Cys-76–Cys-81.

The protein belongs to the three-finger toxin family. Short-chain subfamily. Type I alpha-neurotoxin sub-subfamily. In terms of tissue distribution, expressed by the venom gland.

It localises to the secreted. The chain is Weak toxin DE-1 from Ophiophagus hannah (King cobra).